Consider the following 603-residue polypeptide: Adenine deaminase (603 aa).

This sequence belongs to the metallo-dependent hydrolases superfamily. Adenine deaminase family. The cofactor is Mn(2+).

It carries out the reaction adenine + H2O + H(+) = hypoxanthine + NH4(+). This is Adenine deaminase from Ruegeria pomeroyi (strain ATCC 700808 / DSM 15171 / DSS-3) (Silicibacter pomeroyi).